A 291-amino-acid polypeptide reads, in one-letter code: Phosphatidylglycerol--prolipoprotein diacylglyceryl transferase (291 aa).

Transmembrane regions (helical) follow at residues 21–41 (VALH…MWLA), 60–80 (LLYA…VLFY), 96–116 (WDGG…MIIF), 130–150 (FIAP…FING), 198–218 (SQLY…NLFI), 225–245 (GAVS…VEFF), and 260–280 (ISMG…MMVW). Residue Arg143 coordinates a 1,2-diacyl-sn-glycero-3-phospho-(1'-sn-glycerol).

Belongs to the Lgt family.

Its subcellular location is the cell inner membrane. It catalyses the reaction L-cysteinyl-[prolipoprotein] + a 1,2-diacyl-sn-glycero-3-phospho-(1'-sn-glycerol) = an S-1,2-diacyl-sn-glyceryl-L-cysteinyl-[prolipoprotein] + sn-glycerol 1-phosphate + H(+). It functions in the pathway protein modification; lipoprotein biosynthesis (diacylglyceryl transfer). Catalyzes the transfer of the diacylglyceryl group from phosphatidylglycerol to the sulfhydryl group of the N-terminal cysteine of a prolipoprotein, the first step in the formation of mature lipoproteins. This chain is Phosphatidylglycerol--prolipoprotein diacylglyceryl transferase, found in Salmonella choleraesuis (strain SC-B67).